The following is a 364-amino-acid chain: N-acetyl-gamma-glutamyl-phosphate reductase (364 aa).

C157 is an active-site residue.

This sequence belongs to the NAGSA dehydrogenase family. Type 1 subfamily.

Its subcellular location is the cytoplasm. The catalysed reaction is N-acetyl-L-glutamate 5-semialdehyde + phosphate + NADP(+) = N-acetyl-L-glutamyl 5-phosphate + NADPH + H(+). The protein operates within amino-acid biosynthesis; L-arginine biosynthesis; N(2)-acetyl-L-ornithine from L-glutamate: step 3/4. In terms of biological role, catalyzes the NADPH-dependent reduction of N-acetyl-5-glutamyl phosphate to yield N-acetyl-L-glutamate 5-semialdehyde. The protein is N-acetyl-gamma-glutamyl-phosphate reductase of Bifidobacterium animalis subsp. lactis (strain AD011).